The primary structure comprises 639 residues: Chaperone protein DnaK (639 aa).

Phosphothreonine; by autocatalysis is present on threonine 198. Low complexity predominate over residues 603 to 618; sequence AKAQTQGGAQEGAAKQ. Positions 603-639 are disordered; sequence AKAQTQGGAQEGAAKQSNATADDVVDAEFEEVKDDKK. A compositionally biased stretch (acidic residues) spans 625 to 639; sequence DVVDAEFEEVKDDKK.

This sequence belongs to the heat shock protein 70 family.

Acts as a chaperone. In Shewanella sp. (strain MR-4), this protein is Chaperone protein DnaK.